The following is a 516-amino-acid chain: 2,3-bisphosphoglycerate-independent phosphoglycerate mutase (516 aa).

Residues D13 and S63 each contribute to the Mn(2+) site. The active-site Phosphoserine intermediate is the S63. Residues H124, 154–155 (RD), R186, R192, 262–265 (RPDR), and K337 contribute to the substrate site. The Mn(2+) site is built by D404, H408, D445, H446, and H464.

It belongs to the BPG-independent phosphoglycerate mutase family. Monomer. Mn(2+) serves as cofactor.

It catalyses the reaction (2R)-2-phosphoglycerate = (2R)-3-phosphoglycerate. It participates in carbohydrate degradation; glycolysis; pyruvate from D-glyceraldehyde 3-phosphate: step 3/5. In terms of biological role, catalyzes the interconversion of 2-phosphoglycerate and 3-phosphoglycerate. This Cellvibrio japonicus (strain Ueda107) (Pseudomonas fluorescens subsp. cellulosa) protein is 2,3-bisphosphoglycerate-independent phosphoglycerate mutase.